A 643-amino-acid polypeptide reads, in one-letter code: Phosphomethylpyrimidine synthase (643 aa).

Residues Asn-248, Met-277, Tyr-306, His-342, 362–364 (SRG), 403–406 (DGLR), and Glu-442 contribute to the substrate site. His-446 contributes to the Zn(2+) binding site. Tyr-469 contacts substrate. His-510 provides a ligand contact to Zn(2+). Residues Cys-590, Cys-593, and Cys-598 each coordinate [4Fe-4S] cluster.

This sequence belongs to the ThiC family. Homodimer. [4Fe-4S] cluster serves as cofactor.

The catalysed reaction is 5-amino-1-(5-phospho-beta-D-ribosyl)imidazole + S-adenosyl-L-methionine = 4-amino-2-methyl-5-(phosphooxymethyl)pyrimidine + CO + 5'-deoxyadenosine + formate + L-methionine + 3 H(+). Its pathway is cofactor biosynthesis; thiamine diphosphate biosynthesis. In terms of biological role, catalyzes the synthesis of the hydroxymethylpyrimidine phosphate (HMP-P) moiety of thiamine from aminoimidazole ribotide (AIR) in a radical S-adenosyl-L-methionine (SAM)-dependent reaction. The chain is Phosphomethylpyrimidine synthase from Burkholderia cenocepacia (strain ATCC BAA-245 / DSM 16553 / LMG 16656 / NCTC 13227 / J2315 / CF5610) (Burkholderia cepacia (strain J2315)).